Reading from the N-terminus, the 236-residue chain is Small ribosomal subunit protein uS2c (236 aa).

Belongs to the universal ribosomal protein uS2 family.

The protein resides in the plastid. It localises to the chloroplast. In Oryza sativa (Rice), this protein is Small ribosomal subunit protein uS2c (rps2).